Reading from the N-terminus, the 815-residue chain is Polyribonucleotide nucleotidyltransferase (815 aa).

Positions 489 and 495 each coordinate Mg(2+). The region spanning 556–615 (PRFYTLQIPTDKIRDLIGPGGKVIRGIVEATGVKIDVEDSGKVNVASSDQEAAKKALKMI) is the KH domain. Residues 625–692 (GKTYLGTVTR…DGNRIKLSRK (68 aa)) form the S1 motif domain. Positions 700 to 815 (AKMATEGGGD…GGGGGGRGRG (116 aa)) are disordered. Positions 723-734 (APGGVTFEGGYE) are enriched in gly residues. Over residues 735–745 (GGDEPEVEEGE) the composition is skewed to acidic residues. Gly residues predominate over residues 775–815 (PHGGGGGAGRGGRGRRPGGGGGGGRGGHGGRGGGGGGRGRG).

The protein belongs to the polyribonucleotide nucleotidyltransferase family. It depends on Mg(2+) as a cofactor.

It localises to the cytoplasm. It carries out the reaction RNA(n+1) + phosphate = RNA(n) + a ribonucleoside 5'-diphosphate. Its function is as follows. Involved in mRNA degradation. Catalyzes the phosphorolysis of single-stranded polyribonucleotides processively in the 3'- to 5'-direction. In Koribacter versatilis (strain Ellin345), this protein is Polyribonucleotide nucleotidyltransferase.